The chain runs to 190 residues: Large ribosomal subunit protein bL9 (190 aa).

The protein belongs to the bacterial ribosomal protein bL9 family.

Functionally, binds to the 23S rRNA. This is Large ribosomal subunit protein bL9 from Methylorubrum extorquens (strain CM4 / NCIMB 13688) (Methylobacterium extorquens).